Reading from the N-terminus, the 216-residue chain is Nucleolar protein 12 (216 aa).

A coiled-coil region spans residues 33–97 (GFHKRKVERK…LVTAKTESVQ (65 aa)). Positions 120-216 (LLGLPLPEQG…MTGKARHNGE (97 aa)) are disordered. The span at 129–140 (GDQDGSQEEEVS) shows a compositional bias: acidic residues. Composition is skewed to basic residues over residues 171–183 (AHSRKKVKRKHPR) and 200–216 (KTQRRRRMTGKARHNGE).

Belongs to the RRP17 family. In terms of assembly, interacts with KIAA1191.

It is found in the nucleus. Its subcellular location is the nucleolus. The protein localises to the cytoplasm. Functionally, multifunctional RNA binding protein that plays a role in RNA metabolism and DNA maintenance. Participates in the resolution of DNA stress and the maintenance of genome integrity by localizing to sites of DNA insults. Also plays a role in proper nucleolar organization by limiting nucleolar size and regulating nucleolar number. Mechanistically, regulates the nucleolar levels of fibrillarin and nucleolin, two key players in pre-rRNA processing and ribosome assembly. The polypeptide is Nucleolar protein 12 (Nol12) (Rattus norvegicus (Rat)).